A 122-amino-acid polypeptide reads, in one-letter code: Acidic phospholipase A2 Tpu-E6c (122 aa).

Disulfide bonds link C26–C115, C28–C44, C43–C95, C49–C122, C50–C88, C57–C81, and C75–C86. Ca(2+) is bound by residues Y27, G29, and G31. H47 is an active-site residue. D48 is a binding site for Ca(2+). D89 is an active-site residue.

As to quaternary structure, monomer. Ca(2+) is required as a cofactor. As to expression, expressed by the venom gland.

The protein localises to the secreted. The catalysed reaction is a 1,2-diacyl-sn-glycero-3-phosphocholine + H2O = a 1-acyl-sn-glycero-3-phosphocholine + a fatty acid + H(+). In terms of biological role, snake venom phospholipase A2 (PLA2) that impairs hemostasis. It weakly inhibits ADP-induced platelet aggregation when tested on platelet rich plasma from human and rabbit blood (15-25% of inhibition at 5-10 ug of enzyme), and dose-dependently inhibits blood coagulation, possibly by inhibiting thrombin activation. Exhibits high hydrolytic activities toward L-dipalmitoyl phosphatidylcholine. PLA2 catalyzes the calcium-dependent hydrolysis of the 2-acyl groups in 3-sn-phosphoglycerides. This chain is Acidic phospholipase A2 Tpu-E6c, found in Craspedocephalus puniceus (Flat-nosed pitviper).